The primary structure comprises 616 residues: Chaperone protein HscA homolog (616 aa).

The protein belongs to the heat shock protein 70 family.

In terms of biological role, chaperone involved in the maturation of iron-sulfur cluster-containing proteins. Has a low intrinsic ATPase activity which is markedly stimulated by HscB. This is Chaperone protein HscA homolog from Histophilus somni (strain 2336) (Haemophilus somnus).